A 1146-amino-acid polypeptide reads, in one-letter code: MAQFGGQKNPPWATQFTATAVSQPAALGVQQPSLLGASPTIYTQQTALAAAGLTTQTPANYQLTQTAALQQQAAAVLQQQYSQPQQALYSVQQQLQQPQQTILTQPAVALPTSLSLSTPQPAAQITVSYPTPRSSQQQTQPQKQRVFTGVVTKLHDTFGFVDEDVFFQLGAVKGKTPQVGDRVLVEATYNPNMPFKWNAQRIQTLPNQNQSQTQPLLKTPTAVIQPIVPQTTFGVQAQPQPQSLLQAQISAASITPLLQTQPQPLLQQPQQKAGLLQPPVRIVSQPQPARRLDPPSRFSGRNDRGDQVPNRKDDRSRERDRERRRSRERSPQRKRSRERSPRRERERSPRRVRRVVPRYTVQFSKFSLDCPSCDMMELRRRYQNLYIPSDFFDAQFTWVDAFPLSRPFQLGNYCNFYVMHREVESLEKNMAVLDPPDADHLYSAKVMLMASPSMEDLYHKSCALAEDPQDLRDGFQHPARLVKFLVGMKGKDEAMAIGGHWSPSLDGPNPEKDPSVLIKTAIRCCKALTGIDLSVCTQWYRFAEIRYHRPEETHKGRTVPAHVETVVLFFPDVWHCLPTRSEWETLSRGYKQQLVEKLQGERKKADGEQDEEEKDDGEVKEIATPTHWSKLDPKAMKVNDLRKELESRALSSKGLKSQLIARLTKQLKIEEQKEEQKELEKSEKEEEDEDDKKSEDDKEEEERKRQEEVERQRQERRYILPDEPAIIVHPNWAAKSGKFDCSIMSLSVLLDYRLEDNKEHSFEVSLFAELFNEMLQRDFGVRIYKSLLSLPEKEDKKDKEKKSKKEERKDKKEEREDDIDEPKPKRRKSGDDKDKKEDRDERKKEEKRKDDSKDDDETEEDNNQDEYDPMEAEEAEDEDDDREEEEVKRDDKRDVSRYCKDRPAKDKEKEKPQMVTVNRDLLMAFVYFDQSHCGYLLEKDLEEILYTLGLHLSRAQVKKLLNKVVLRESCFYRKLTDTSKDDENHEESEALQEDMLGNRLLLPTPTIKQESKDGEENVGLIVYNGAMVDVGSLLQKLEKSEKVRAEVEQKLQLLEEKTDEDGKTILNLENSNKSLSGELREVKKDLGQLQENLEVSENMNLQFENQLNKTLRNLSTVMDDIHTVLKKDNVKSEDRDEKSKENGSGV.

The tract at residues 1-246 (MAQFGGQKNP…AQPQPQSLLQ (246 aa)) is interaction with AR. The interaction with GATA2 stretch occupies residues 200 to 657 (QRIQTLPNQN…RALSSKGLKS (458 aa)). A disordered region spans residues 282 to 351 (IVSQPQPARR…RRERERSPRR (70 aa)). Composition is skewed to basic and acidic residues over residues 290-331 (RRLD…ERSP) and 338-349 (ERSPRRERERSP). At Ser-453 the chain carries Phosphoserine. Positions 591-615 (KQQLVEKLQGERKKADGEQDEEEKD) form a coiled coil. The disordered stretch occupies residues 599–635 (QGERKKADGEQDEEEKDDGEVKEIATPTHWSKLDPKA). Acidic residues predominate over residues 608 to 618 (EQDEEEKDDGE). Phosphothreonine is present on Thr-624. One can recognise an SAP domain in the interval 633–667 (PKAMKVNDLRKELESRALSSKGLKSQLIARLTKQL). A Glycyl lysine isopeptide (Lys-Gly) (interchain with G-Cter in ubiquitin) cross-link involves residue Lys-634. The segment at 640 to 1146 (DLRKELESRA…EKSKENGSGV (507 aa)) is interaction with GATA1. Residue Thr-664 is modified to Phosphothreonine. 4 stretches are compositionally biased toward basic and acidic residues: residues 671–684 (EQKEEQKELEKSEK), 691–716 (DKKSEDDKEEEERKRQEEVERQRQER), 793–814 (KEDKKDKEKKSKKEERKDKKEE), and 829–852 (SGDDKDKKEDRDERKKEEKRKDDS). Disordered stretches follow at residues 671–716 (EQKE…RQER) and 793–912 (KEDK…KEKP). Ser-682 and Ser-694 each carry phosphoserine. The segment covering 853–884 (KDDDETEEDNNQDEYDPMEAEEAEDEDDDREE) has biased composition (acidic residues). Thr-858 is modified (phosphothreonine). The span at 885 to 912 (EEVKRDDKRDVSRYCKDRPAKDKEKEKP) shows a compositional bias: basic and acidic residues. Lys-1008 participates in a covalent cross-link: Glycyl lysine isopeptide (Lys-Gly) (interchain with G-Cter in SUMO1); alternate. Residue Lys-1008 forms a Glycyl lysine isopeptide (Lys-Gly) (interchain with G-Cter in SUMO2); alternate linkage. Positions 1029-1110 (DVGSLLQKLE…LQFENQLNKT (82 aa)) form a coiled coil. Residues Lys-1063 and Lys-1131 each participate in a glycyl lysine isopeptide (Lys-Gly) (interchain with G-Cter in SUMO2) cross-link.

Directly interacts with ESR1, NR3C1 and p53/TP53. Interacts (via N-terminus) with CALCOCO1. Interacts with MED1 and GATA1. Interacts with AR and GATA2.

It is found in the cytoplasm. It localises to the perinuclear region. Functionally, associates with components of the Mediator and p160 coactivator complexes that play a role as intermediaries transducing regulatory signals from upstream transcriptional activator proteins to basal transcription machinery at the core promoter. Recruited to endogenous nuclear receptor target genes in response to the appropriate hormone. Also functions as a p53 coactivator. May thus play an important role in transcriptional regulation. May be involved in apoptosis signaling in the presence of the retinoid CD437. Apoptosis induction involves sequestration of 14-3-3 protein(s) and mediated altered expression of multiple cell cycle regulatory genes including MYC, CCNB1 and CDKN1A. Plays a role in cell cycle progression and/or cell proliferation. In association with CALCOCO1 enhances GATA1- and MED1-mediated transcriptional activation from the gamma-globin promoter during erythroid differentiation of K562 erythroleukemia cells. Can act as a both a coactivator and corepressor of AR-mediated transcription. Contributes to chromatin looping and AR transcription complex assembly by stabilizing AR-GATA2 association on chromatin and facilitating MED1 and RNA polymerase II recruitment to AR-binding sites. May play an important role in the growth and tumorigenesis of prostate cancer cells. This chain is Cell division cycle and apoptosis regulator protein 1 (Ccar1), found in Mus musculus (Mouse).